Reading from the N-terminus, the 364-residue chain is 3-dehydroquinate synthase (364 aa).

NAD(+) is bound by residues G105–D109, T129–T130, K142, and K151. Positions 184, 247, and 264 each coordinate Zn(2+).

It belongs to the sugar phosphate cyclases superfamily. Dehydroquinate synthase family. Co(2+) is required as a cofactor. It depends on Zn(2+) as a cofactor. NAD(+) serves as cofactor.

It is found in the cytoplasm. It carries out the reaction 7-phospho-2-dehydro-3-deoxy-D-arabino-heptonate = 3-dehydroquinate + phosphate. It functions in the pathway metabolic intermediate biosynthesis; chorismate biosynthesis; chorismate from D-erythrose 4-phosphate and phosphoenolpyruvate: step 2/7. Catalyzes the conversion of 3-deoxy-D-arabino-heptulosonate 7-phosphate (DAHP) to dehydroquinate (DHQ). In Acidithiobacillus ferrooxidans (strain ATCC 23270 / DSM 14882 / CIP 104768 / NCIMB 8455) (Ferrobacillus ferrooxidans (strain ATCC 23270)), this protein is 3-dehydroquinate synthase.